We begin with the raw amino-acid sequence, 463 residues long: Elongation factor 1-alpha (463 aa).

Positions 5–242 (KTHINIVVIG…DAILPPARPT (238 aa)) constitute a tr-type G domain. The segment at 14 to 21 (GHVDSGKS) is G1. GTP is bound at residue 14–21 (GHVDSGKS). Residues 70-74 (GITID) form a G2 region. The tract at residues 91-94 (DAPG) is G3. GTP-binding positions include 91–95 (DAPGH) and 153–156 (NKMD). The segment at 153–156 (NKMD) is G4. Residues 194–196 (SGW) form a G5 region. Glu301 and Glu374 each carry 5-glutamyl glycerylphosphorylethanolamine.

It belongs to the TRAFAC class translation factor GTPase superfamily. Classic translation factor GTPase family. EF-Tu/EF-1A subfamily.

The protein resides in the cytoplasm. This protein promotes the GTP-dependent binding of aminoacyl-tRNA to the A-site of ribosomes during protein biosynthesis. This chain is Elongation factor 1-alpha, found in Bombyx mori (Silk moth).